Consider the following 204-residue polypeptide: Guanylate kinase (204 aa).

Residues 4–182 enclose the Guanylate kinase-like domain; the sequence is GMLVVVSGPS…AVNDLEAVLT (179 aa). ATP is bound at residue 11–18; the sequence is GPSGAGKG.

It belongs to the guanylate kinase family.

It localises to the cytoplasm. It catalyses the reaction GMP + ATP = GDP + ADP. Essential for recycling GMP and indirectly, cGMP. The protein is Guanylate kinase of Carboxydothermus hydrogenoformans (strain ATCC BAA-161 / DSM 6008 / Z-2901).